Consider the following 693-residue polypeptide: TBC1 domain family member 14 (693 aa).

Phosphoserine is present on Ser91. Disordered regions lie at residues 108–130 (PSCA…SSTF) and 271–304 (NAQK…RKNL). Basic and acidic residues predominate over residues 271–288 (NAQKDSKRIQKEYEDKAG). Ser295 is subject to Phosphoserine. One can recognise a Rab-GAP TBC domain in the interval 401–611 (GIPPSVRGKV…RIWDVFCRDG (211 aa)).

Interacts with ULK1. May interact with RAB11A and RAB11B, but does not exhibit any GTPase-activating activity toward these proteins. Interacts with TRAPPC8.

It localises to the golgi apparatus. It is found in the cis-Golgi network. Its subcellular location is the trans-Golgi network. Plays a role in the regulation of starvation-induced autophagosome formation. Together with the TRAPPIII complex, regulates a constitutive trafficking step from peripheral recycling endosomes to the early Golgi, maintaining the cycling pool of ATG9 required for initiation of autophagy. This Homo sapiens (Human) protein is TBC1 domain family member 14 (TBC1D14).